A 394-amino-acid polypeptide reads, in one-letter code: Elongation factor Tu (394 aa).

The tr-type G domain maps to 10–204 (KPHVNVGTIG…ALDTYIPEPE (195 aa)). The segment at 19 to 26 (GHVDHGKT) is G1. 19 to 26 (GHVDHGKT) serves as a coordination point for GTP. A Mg(2+)-binding site is contributed by T26. A G2 region spans residues 60–64 (GITIN). Positions 81 to 84 (DCPG) are G3. GTP is bound by residues 81 to 85 (DCPGH) and 136 to 139 (NKCD). The interval 136–139 (NKCD) is G4. The segment at 174–176 (SAL) is G5.

This sequence belongs to the TRAFAC class translation factor GTPase superfamily. Classic translation factor GTPase family. EF-Tu/EF-1A subfamily. In terms of assembly, monomer.

It is found in the cytoplasm. The catalysed reaction is GTP + H2O = GDP + phosphate + H(+). Its function is as follows. GTP hydrolase that promotes the GTP-dependent binding of aminoacyl-tRNA to the A-site of ribosomes during protein biosynthesis. The chain is Elongation factor Tu from Vibrio cholerae serotype O1 (strain ATCC 39541 / Classical Ogawa 395 / O395).